The sequence spans 423 residues: Gamma-glutamyl phosphate reductase (423 aa).

The protein belongs to the gamma-glutamyl phosphate reductase family.

The protein localises to the cytoplasm. It catalyses the reaction L-glutamate 5-semialdehyde + phosphate + NADP(+) = L-glutamyl 5-phosphate + NADPH + H(+). It functions in the pathway amino-acid biosynthesis; L-proline biosynthesis; L-glutamate 5-semialdehyde from L-glutamate: step 2/2. Its function is as follows. Catalyzes the NADPH-dependent reduction of L-glutamate 5-phosphate into L-glutamate 5-semialdehyde and phosphate. The product spontaneously undergoes cyclization to form 1-pyrroline-5-carboxylate. The polypeptide is Gamma-glutamyl phosphate reductase (Burkholderia pseudomallei (strain 1710b)).